Here is a 268-residue protein sequence, read N- to C-terminus: 4-hydroxy-tetrahydrodipicolinate reductase (268 aa).

9 to 14 serves as a coordination point for NAD(+); it reads GCSGRM. Arg-36 is a binding site for NADP(+). Residues 98 to 100 and 122 to 125 each bind NAD(+); these read GTT and APNT. His-155 functions as the Proton donor/acceptor in the catalytic mechanism. His-156 is a binding site for (S)-2,3,4,5-tetrahydrodipicolinate. Lys-159 (proton donor) is an active-site residue. 165 to 166 is a binding site for (S)-2,3,4,5-tetrahydrodipicolinate; the sequence is GT.

Belongs to the DapB family.

The protein localises to the cytoplasm. The catalysed reaction is (S)-2,3,4,5-tetrahydrodipicolinate + NAD(+) + H2O = (2S,4S)-4-hydroxy-2,3,4,5-tetrahydrodipicolinate + NADH + H(+). It carries out the reaction (S)-2,3,4,5-tetrahydrodipicolinate + NADP(+) + H2O = (2S,4S)-4-hydroxy-2,3,4,5-tetrahydrodipicolinate + NADPH + H(+). The protein operates within amino-acid biosynthesis; L-lysine biosynthesis via DAP pathway; (S)-tetrahydrodipicolinate from L-aspartate: step 4/4. Functionally, catalyzes the conversion of 4-hydroxy-tetrahydrodipicolinate (HTPA) to tetrahydrodipicolinate. In Colwellia psychrerythraea (strain 34H / ATCC BAA-681) (Vibrio psychroerythus), this protein is 4-hydroxy-tetrahydrodipicolinate reductase.